The sequence spans 320 residues: Cytochrome f (320 aa).

An N-terminal signal peptide occupies residues 1 to 36; that stretch reads MKLNSLINLIQKSIYSCTLLLTILNIICIAPNSSNA. 4 residues coordinate heme: phenylalanine 37, cysteine 57, cysteine 60, and histidine 61. The helical transmembrane segment at 286-305 threads the bilayer; that stretch reads IKGMIAFFFVSVLAQIFFVL.

Belongs to the cytochrome f family. As to quaternary structure, the 4 large subunits of the cytochrome b6-f complex are cytochrome b6, subunit IV (17 kDa polypeptide, petD), cytochrome f and the Rieske protein, while the 4 small subunits are PetG, PetL, PetM and PetN. The complex functions as a dimer. Requires heme as cofactor.

It localises to the plastid. Its subcellular location is the chloroplast thylakoid membrane. Its function is as follows. Component of the cytochrome b6-f complex, which mediates electron transfer between photosystem II (PSII) and photosystem I (PSI), cyclic electron flow around PSI, and state transitions. In Porphyra purpurea (Red seaweed), this protein is Cytochrome f (petA).